We begin with the raw amino-acid sequence, 930 residues long: MAAPYKSDRRGLIWICIFLGSLCDIRAEQIRYSVPEELERGSVVGNLAADLGLEPGKLAERGVRIVSRGKTQLFALNPRSGSLVTAGRVDREGLCDRSPKCTANLEILLEDKVRILAIEVEIIDVNDNAPSFGAQQREIKVAESENPGTRFPLPEAFDLDIGVNALQGYQLSSNDHFSLDVQSGPDGIKYPELVLENALDREEEAVHHLVLTAFDGGDPVRSGTATIQVTLVDTNDNAPVFTQPEYHISVKENLPVGTRLLTIKATDPDEGVNGEVTYSFRNVREKISQLFQLNSLTGDITVLGELDYEDSGFYDVDVEAHDGPGLRARSKVLVTVLDVNDNAPEVTVTSLTSSIQEASSPGTVIALFNVHDSDSGENGLVTCSIPDNLPFRLEKTYGNYHRLLIHRTLDREEVSDYNITITATDQGTPPLSTETYISLQVVDINDNPPTFTHASYSAYIPENNPRGASILSITAQDPDSGENAQVIYSLSEDTIQGAPMSSYVSINSNTGVLYALRSFDYEQFQDLKLLVTARDSGTPPLSSNVSLSLSVLDQNDNTPEILYPTIPTDGSTGVELTPRSADPGYLVTKVVAVDKDSGQNAWLSYRLLKASEPGLFSVGLHTGEVRTARALLDRDALKQSLVVTVQDHGQPPLSATVTLTIAVSDNIPDILADLVNINAPIDQEDSDITLYLVVAVAAVSCVFLAFVIVLLIHRLRRWHSTRLLQAAGNGLSSLPASHFVGVDGVHAFLQTYSHEVSLTADSGKSHLIFPQPNYADTLISQESCGKSDPLLVSQDLLEIKGDSSLQQAPPNTDWRFSQAQRPGTSGSQNGDETGTWPNNQFDTEMLQAMILASASEAADGSSTLGGGAGTMGLSARYGPQFTLQHVPDYRQNVYIPGSNATLTNAAGKRDGKAPAGGNGNKKKSGKKEKK.

A signal peptide spans 1–27; that stretch reads MAAPYKSDRRGLIWICIFLGSLCDIRA. 6 consecutive Cadherin domains span residues 28-132, 133-241, 242-346, 347-451, 452-561, and 569-682; these read EQIR…APSF, GAQQ…APVF, TQPE…APEV, TVTS…PPTF, THAS…TPEI, and DGST…APID. Over 28 to 691 the chain is Extracellular; it reads EQIRYSVPEE…DQEDSDITLY (664 aa). N-linked (GlcNAc...) asparagine glycosylation is found at Asn418 and Asn544. Residues 692–712 traverse the membrane as a helical segment; that stretch reads LVVAVAAVSCVFLAFVIVLLI. The Cytoplasmic segment spans residues 713-930; it reads HRLRRWHSTR…KKKSGKKEKK (218 aa). Disordered regions lie at residues 803 to 839 and 900 to 930; these read SSLQ…WPNN and ATLT…KEKK. A compositionally biased stretch (basic residues) spans 920 to 930; the sequence is NKKKSGKKEKK.

The protein localises to the cell membrane. Potential calcium-dependent cell-adhesion protein. May be involved in the establishment and maintenance of specific neuronal connections in the brain. This is Protocadherin gamma-A4 from Mus musculus (Mouse).